The sequence spans 389 residues: Dihydroorotase (389 aa).

Zn(2+) is bound by residues H51 and H53. Substrate is bound by residues 53 to 55 and N85; that span reads HVR. Zn(2+) is bound by residues K133, H158, H193, and D256. Position 133 is an N6-carboxylysine (K133). The active site involves D256. Residues H260 and 274-275 contribute to the substrate site; that span reads PG.

This sequence belongs to the metallo-dependent hydrolases superfamily. DHOase family. Class I DHOase subfamily. Requires Zn(2+) as cofactor.

The catalysed reaction is (S)-dihydroorotate + H2O = N-carbamoyl-L-aspartate + H(+). It functions in the pathway pyrimidine metabolism; UMP biosynthesis via de novo pathway; (S)-dihydroorotate from bicarbonate: step 3/3. Functionally, catalyzes the reversible cyclization of carbamoyl aspartate to dihydroorotate. This chain is Dihydroorotase, found in Sulfolobus acidocaldarius (strain ATCC 33909 / DSM 639 / JCM 8929 / NBRC 15157 / NCIMB 11770).